Reading from the N-terminus, the 583-residue chain is MAPISIADIVAALPAEDTWGPATSTDNMLQGVPYAPFSKGDKLGRMADWTSESKDQRTGRQAYNRNFRDQQVYGAGSSNLFSIQAAEDESSFSVVDNTRTSAKRTFGRGGGTVFRGRAQRGAGQRGGRAGFQRVGAGRGQGDRFYDNRGGRSNRGRRFGWKDYDKPQRTREPSVNVRPDWTMLEEVDFSRLLKLNLETPDGEDVDSYGFLYYYDRSYDKAPVKGAERRLQSLDRAAYNVTTSQDPVIQELAEKDAATVFATSDILSMLMCAPRSVYSWDIVIVHQGNKIYFDKREGASLDLVTVNENAIDAPLELAESSAKQESINTPSALAMEATFINHNFALQTVAESQDAKVDMKNANPFYNASEETEPLASKAYKYRRFDLSLERDEEPLNMVVRTEVDALLKNPVNGEDQQLIVKALNEFDSKAQGSGNALDWRSKLWSQRGAVVATEMKNNSLKLARWTTQAVLAKADGMKLGFVSRANPRSAAGHVVLGVVGYKPRDLAAQMNLNLGNGWGIVRTIVDRIRALDAEEDEEKVKKYVLIKDPNRPVLRLYSVPANTFEEDEEAAAEEEEQKAEEDEE.

Residues Gly116 to Gly150 are disordered. Basic and acidic residues predominate over residues Gln140 to Gly149. An RNA gate region spans residues Ser298–Pro312. Residues Asn561–Glu583 are disordered. The span at Phe563–Glu583 shows a compositional bias: acidic residues.

It belongs to the eIF-3 subunit D family. Component of the eukaryotic translation initiation factor 3 (eIF-3) complex.

It localises to the cytoplasm. In terms of biological role, mRNA cap-binding component of the eukaryotic translation initiation factor 3 (eIF-3) complex, which is involved in protein synthesis of a specialized repertoire of mRNAs and, together with other initiation factors, stimulates binding of mRNA and methionyl-tRNAi to the 40S ribosome. The eIF-3 complex specifically targets and initiates translation of a subset of mRNAs involved in cell proliferation. In the eIF-3 complex, eif3d specifically recognizes and binds the 7-methylguanosine cap of a subset of mRNAs. The chain is Eukaryotic translation initiation factor 3 subunit D from Aspergillus oryzae (strain ATCC 42149 / RIB 40) (Yellow koji mold).